Consider the following 245-residue polypeptide: Probable GTP-binding protein EngB (245 aa).

The EngB-type G domain occupies 46-223; it reads DVPEIAFVGR…AQHLWDWAHP (178 aa). GTP-binding positions include 54 to 61, 81 to 85, 103 to 106, 173 to 176, and 202 to 204; these read GRSNAGKS, GRTQS, DLPG, TKSD, and FSS. Residues Ser61 and Thr83 each contribute to the Mg(2+) site. Residues 219 to 245 are disordered; sequence DWAHPPEKPAKKPKAEPAAEAATGDEG. Over residues 222 to 235 the composition is skewed to basic and acidic residues; that stretch reads HPPEKPAKKPKAEP. Residues 236–245 are compositionally biased toward low complexity; the sequence is AAEAATGDEG.

The protein belongs to the TRAFAC class TrmE-Era-EngA-EngB-Septin-like GTPase superfamily. EngB GTPase family. The cofactor is Mg(2+).

Its function is as follows. Necessary for normal cell division and for the maintenance of normal septation. In Polaromonas sp. (strain JS666 / ATCC BAA-500), this protein is Probable GTP-binding protein EngB.